The following is an 89-amino-acid chain: Large ribosomal subunit protein bL28 (89 aa).

Belongs to the bacterial ribosomal protein bL28 family.

The protein is Large ribosomal subunit protein bL28 of Chlamydia caviae (strain ATCC VR-813 / DSM 19441 / 03DC25 / GPIC) (Chlamydophila caviae).